The sequence spans 263 residues: Small ribosomal subunit protein eS4 (263 aa).

The S4 RNA-binding domain occupies 42-104 (LPLVIFLRNR…TNELFRLIYD (63 aa)).

It belongs to the eukaryotic ribosomal protein eS4 family.

The protein is Small ribosomal subunit protein eS4 (RpS4) of Spodoptera frugiperda (Fall armyworm).